Consider the following 660-residue polypeptide: Polyadenylate-binding protein 3 (660 aa).

RRM domains follow at residues 49-126 (SSLY…LSNR), 136-213 (GNIF…HFIR), 229-306 (TNVY…RAQK), and 332-409 (ANLY…LAQR). Positions 571–648 (PISKLTSSLA…ALDVLRLSVD (78 aa)) constitute a PABC domain.

It belongs to the polyadenylate-binding protein type-1 family. As to expression, expressed predominantly in immature flowers. Detected in tapetum and pollen. Strongly expressed in immatures siliques.

It localises to the cytoplasm. It is found in the nucleus. Binds the poly(A) tail of mRNA. Appears to be an important mediator of the multiple roles of the poly(A) tail in mRNA biogenesis, stability and translation. In the cytoplasm, affects both translation and mRNA decay. Inhibits the polyadenylated RNA degradation by the Rrp41p 3'--&gt;5' exonuclease in vitro. Binds with the 5'UTRs of PAB2, PAB3 and with a lower affinity with the 5'UTR of PAB5. This is Polyadenylate-binding protein 3 (PAB3) from Arabidopsis thaliana (Mouse-ear cress).